The sequence spans 40 residues: Snaclec LmrLEC-1 (40 aa).

An intrachain disulfide couples C2 to C13.

The protein belongs to the snaclec family. As to quaternary structure, dimer (non-covalently linked) of heterodimers of subunits alpha and beta (disulfide-linked). As to expression, expressed by the venom gland.

It is found in the secreted. Its function is as follows. Interferes with one step of hemostasis (modulation of platelet aggregation, or coagulation cascade, for example). This Lachesis muta rhombeata (Bushmaster) protein is Snaclec LmrLEC-1.